A 166-amino-acid polypeptide reads, in one-letter code: Ribosome maturation factor RimM (166 aa).

A PRC barrel domain is found at 94 to 165; sequence EGEYYLGKLI…TIELKVLDLL (72 aa).

It belongs to the RimM family. In terms of assembly, binds ribosomal protein uS19.

Its subcellular location is the cytoplasm. Functionally, an accessory protein needed during the final step in the assembly of 30S ribosomal subunit, possibly for assembly of the head region. Essential for efficient processing of 16S rRNA. May be needed both before and after RbfA during the maturation of 16S rRNA. It has affinity for free ribosomal 30S subunits but not for 70S ribosomes. The polypeptide is Ribosome maturation factor RimM (Borrelia garinii subsp. bavariensis (strain ATCC BAA-2496 / DSM 23469 / PBi) (Borreliella bavariensis)).